A 140-amino-acid chain; its full sequence is ATP synthase epsilon chain (140 aa).

Belongs to the ATPase epsilon chain family. As to quaternary structure, F-type ATPases have 2 components, CF(1) - the catalytic core - and CF(0) - the membrane proton channel. CF(1) has five subunits: alpha(3), beta(3), gamma(1), delta(1), epsilon(1). CF(0) has three main subunits: a, b and c.

It localises to the cell membrane. In terms of biological role, produces ATP from ADP in the presence of a proton gradient across the membrane. The chain is ATP synthase epsilon chain (atpC) from Enterococcus hirae (strain ATCC 9790 / DSM 20160 / JCM 8729 / LMG 6399 / NBRC 3181 / NCIMB 6459 / NCDO 1258 / NCTC 12367 / WDCM 00089 / R).